Reading from the N-terminus, the 217-residue chain is ATP phosphoribosyltransferase (217 aa).

The protein belongs to the ATP phosphoribosyltransferase family. Short subfamily. In terms of assembly, heteromultimer composed of HisG and HisZ subunits.

It localises to the cytoplasm. It catalyses the reaction 1-(5-phospho-beta-D-ribosyl)-ATP + diphosphate = 5-phospho-alpha-D-ribose 1-diphosphate + ATP. Its pathway is amino-acid biosynthesis; L-histidine biosynthesis; L-histidine from 5-phospho-alpha-D-ribose 1-diphosphate: step 1/9. Its function is as follows. Catalyzes the condensation of ATP and 5-phosphoribose 1-diphosphate to form N'-(5'-phosphoribosyl)-ATP (PR-ATP). Has a crucial role in the pathway because the rate of histidine biosynthesis seems to be controlled primarily by regulation of HisG enzymatic activity. This is ATP phosphoribosyltransferase from Syntrophomonas wolfei subsp. wolfei (strain DSM 2245B / Goettingen).